Here is a 447-residue protein sequence, read N- to C-terminus: Chromosomal replication initiator protein DnaA (447 aa).

The domain I, interacts with DnaA modulators stretch occupies residues 1–74; it reads MPDVESFWHS…TGFKLTGAEV (74 aa). Positions 74 to 109 are domain II; that stretch reads VMPHFVVADEKDAALAQELEEPAEEEVVFSEQSKKA. The tract at residues 110–326 is domain III, AAA+ region; that stretch reads MLNPKYTFDT…GALVRVQAFA (217 aa). ATP is bound by residues glycine 154, glycine 156, lysine 157, and threonine 158. The interval 327–447 is domain IV, binds dsDNA; that stretch reads TINGEDITTS…VSEIKNLLNS (121 aa).

This sequence belongs to the DnaA family. Oligomerizes as a right-handed, spiral filament on DNA at oriC.

Its subcellular location is the cytoplasm. Its function is as follows. Plays an essential role in the initiation and regulation of chromosomal replication. ATP-DnaA binds to the origin of replication (oriC) to initiate formation of the DNA replication initiation complex once per cell cycle. Binds the DnaA box (a 9 base pair repeat at the origin) and separates the double-stranded (ds)DNA. Forms a right-handed helical filament on oriC DNA; dsDNA binds to the exterior of the filament while single-stranded (ss)DNA is stabiized in the filament's interior. The ATP-DnaA-oriC complex binds and stabilizes one strand of the AT-rich DNA unwinding element (DUE), permitting loading of DNA polymerase. After initiation quickly degrades to an ADP-DnaA complex that is not apt for DNA replication. Binds acidic phospholipids. Strand separation requires the DnaA boxes and adjacent DnaA-trio motifs as well as ATP. The protein is Chromosomal replication initiator protein DnaA of Enterococcus faecalis (strain ATCC 700802 / V583).